Here is a 975-residue protein sequence, read N- to C-terminus: Glycine dehydrogenase (decarboxylating) (975 aa).

Lysine 723 is subject to N6-(pyridoxal phosphate)lysine.

This sequence belongs to the GcvP family. In terms of assembly, the glycine cleavage system is composed of four proteins: P, T, L and H. The cofactor is pyridoxal 5'-phosphate.

It carries out the reaction N(6)-[(R)-lipoyl]-L-lysyl-[glycine-cleavage complex H protein] + glycine + H(+) = N(6)-[(R)-S(8)-aminomethyldihydrolipoyl]-L-lysyl-[glycine-cleavage complex H protein] + CO2. Functionally, the glycine cleavage system catalyzes the degradation of glycine. The P protein binds the alpha-amino group of glycine through its pyridoxal phosphate cofactor; CO(2) is released and the remaining methylamine moiety is then transferred to the lipoamide cofactor of the H protein. This chain is Glycine dehydrogenase (decarboxylating), found in Burkholderia mallei (strain NCTC 10247).